The sequence spans 1032 residues: Argonaute protein hrde-1 (1032 aa).

Disordered regions lie at residues 1–51 (MADL…PIGR) and 298–375 (KLSE…YSPS). Residues 1–551 (MADLLDKIMG…IQMTAKLLPP (551 aa)) form a required to recruit the small-RNA amplification machinery to gene targets and promote gene silencing region. A compositionally biased stretch (basic and acidic residues) spans 18–33 (PKRDNRMNQDKDEPTS). A compositionally biased stretch (gly residues) spans 303–313 (KGGGGGRGGYG). Composition is skewed to basic and acidic residues over residues 315 to 335 (SDSR…RDFR) and 343 to 364 (GNDR…RRDS). The region spanning 376-481 (DAAELEHAFG…FPMELLRIAP (106 aa)) is the PAZ domain. A Piwi domain is found at 650-977 (DILVGIAREK…LAKRGRNNYK (328 aa)).

The protein belongs to the argonaute family. WAGO subfamily. In terms of tissue distribution, expressed in the nuclei of male and female germ cells.

It is found in the cytoplasm. The protein resides in the cytoplasmic ribonucleoprotein granule. The protein localises to the nucleus. In terms of biological role, argonaute protein which is involved in the endogenous small interfering RNA (endo-siRNA) pathway and is required for RNA-mediated gene silencing (RNAi) in the germline. Interacts with secondary 22G-RNAs in an hrde-2-dependent manner; 22G-RNAs are RNA-dependent RNA polymerase-derived endo-siRNAs, typically 22 nucleotides in length with a 5'-guanosine residue. Plays a key role in transgenerational epigenetic inheritance and germline immortality. May be involved in transgenerational gene silencing both by inducing subnuclear-co-localization of target genes into heterochromatin and by activation of small RNA amplification in the nuage. This is Argonaute protein hrde-1 from Caenorhabditis elegans.